A 617-amino-acid chain; its full sequence is Urocanate reductase (617 aa).

T70 is modified (FMN phosphoryl threonine). Residues A124, E143, N151, T152, G156, G157, and D387 each coordinate FAD. R446 acts as the Proton donor in catalysis. FAD contacts are provided by H553, E582, and L598.

Belongs to the FAD-dependent oxidoreductase 2 family. FRD/SDH subfamily. The cofactor is FAD. FMN serves as cofactor.

It carries out the reaction dihydrourocanate + A = urocanate + AH2. Functionally, catalyzes the two-electron reduction of urocanate to dihydrourocanate (also named imidazole propionate or deamino-histidine). Dihydrourocanate is present at higher concentrations in subjects with type 2 diabetes, and directly impairs glucose tolerance and insulin signaling at the level of insulin receptor substrate (IRS) through activation of p38 gamma (MAPK12)-p62-mTORC1. Therefore, the UrdA enzyme from the gut bacteria L.fermentum strain NBRC 3956 may contribute to the pathogenesis of type 2 diabetes by producing the microbial metabolite dihydrourocanate. In Limosilactobacillus fermentum (strain NBRC 3956 / LMG 18251) (Lactobacillus fermentum), this protein is Urocanate reductase.